A 226-amino-acid polypeptide reads, in one-letter code: ATP synthase subunit a (226 aa).

Transmembrane regions (helical) follow at residues 18–38 (FITGFFVVLTAVLMFLISLGA), 79–99 (LAGTIALYVFFSNMIGIIPGF), 105–125 (SWSFTLVLALIVFFYYHFEGI), 134–154 (FAHFAGPVKWLAPFMFPIEII), 179–199 (LIMLLLVPWAVPVAPFMVLFF), and 201–221 (GILQAFVFMILTYVYLAGAVL).

The protein belongs to the ATPase A chain family. In terms of assembly, F-type ATPases have 2 components, CF(1) - the catalytic core - and CF(0) - the membrane proton channel. CF(1) has five subunits: alpha(3), beta(3), gamma(1), delta(1), epsilon(1). CF(0) has three main subunits: a(1), b(2) and c(9-12). The alpha and beta chains form an alternating ring which encloses part of the gamma chain. CF(1) is attached to CF(0) by a central stalk formed by the gamma and epsilon chains, while a peripheral stalk is formed by the delta and b chains.

Its subcellular location is the cell inner membrane. Key component of the proton channel; it plays a direct role in the translocation of protons across the membrane. In Helicobacter pylori (strain HPAG1), this protein is ATP synthase subunit a.